The following is a 373-amino-acid chain: Flagellar P-ring protein (373 aa).

A signal peptide spans 1–28 (MPRVSTHLVKLAAAALCALLLSAVAASA).

Belongs to the FlgI family. In terms of assembly, the basal body constitutes a major portion of the flagellar organelle and consists of four rings (L,P,S, and M) mounted on a central rod.

It is found in the periplasm. Its subcellular location is the bacterial flagellum basal body. In terms of biological role, assembles around the rod to form the L-ring and probably protects the motor/basal body from shearing forces during rotation. The protein is Flagellar P-ring protein of Rhodopseudomonas palustris (strain ATCC BAA-98 / CGA009).